Reading from the N-terminus, the 299-residue chain is Phosphoribosylaminoimidazole-succinocarboxamide synthase (299 aa).

This sequence belongs to the SAICAR synthetase family.

It catalyses the reaction 5-amino-1-(5-phospho-D-ribosyl)imidazole-4-carboxylate + L-aspartate + ATP = (2S)-2-[5-amino-1-(5-phospho-beta-D-ribosyl)imidazole-4-carboxamido]succinate + ADP + phosphate + 2 H(+). It participates in purine metabolism; IMP biosynthesis via de novo pathway; 5-amino-1-(5-phospho-D-ribosyl)imidazole-4-carboxamide from 5-amino-1-(5-phospho-D-ribosyl)imidazole-4-carboxylate: step 1/2. This is Phosphoribosylaminoimidazole-succinocarboxamide synthase from Leifsonia xyli subsp. xyli (strain CTCB07).